We begin with the raw amino-acid sequence, 313 residues long: MNIIFYHPFFEAKQWLSGLQSRLPTANIRQWRRGDTQPADYALVWQPPQEMLASRVELKGVFALGAGVDAILDQERRHPGTLPAGVPLVRLEDTGMSLQMQEYVVATVLRYFRRMDEYQLQQQQKLWQPLEPHQHDKFTIGILGAGVLGKSVAHKLAEFGFTVRCWSRTPKQIDGVTSFAGQEKLPAFIQGTQLLINLLPHTPQTAGILNQSLFSQLNANAYIINIARGAHLLERDLLAAMNAGQVAAATLDVFAEEPLPSMHPFWSHPRVTITPHIAAVTLPEVAMDQVVANIQAMEAGREPVGLVDVVRGY.

Arginine 228 is an active-site residue. The active-site Proton donor is the histidine 276.

It belongs to the D-isomer specific 2-hydroxyacid dehydrogenase family. GhrA subfamily.

It is found in the cytoplasm. It carries out the reaction glycolate + NADP(+) = glyoxylate + NADPH + H(+). The catalysed reaction is (R)-glycerate + NAD(+) = 3-hydroxypyruvate + NADH + H(+). It catalyses the reaction (R)-glycerate + NADP(+) = 3-hydroxypyruvate + NADPH + H(+). Its function is as follows. Catalyzes the NADPH-dependent reduction of glyoxylate and hydroxypyruvate into glycolate and glycerate, respectively. The chain is Glyoxylate/hydroxypyruvate reductase A from Yersinia enterocolitica serotype O:8 / biotype 1B (strain NCTC 13174 / 8081).